We begin with the raw amino-acid sequence, 269 residues long: Tryptophan synthase alpha chain (269 aa).

Catalysis depends on proton acceptor residues Glu49 and Asp60.

The protein belongs to the TrpA family. As to quaternary structure, tetramer of two alpha and two beta chains.

The catalysed reaction is (1S,2R)-1-C-(indol-3-yl)glycerol 3-phosphate + L-serine = D-glyceraldehyde 3-phosphate + L-tryptophan + H2O. It participates in amino-acid biosynthesis; L-tryptophan biosynthesis; L-tryptophan from chorismate: step 5/5. The alpha subunit is responsible for the aldol cleavage of indoleglycerol phosphate to indole and glyceraldehyde 3-phosphate. This is Tryptophan synthase alpha chain from Photobacterium profundum (strain SS9).